We begin with the raw amino-acid sequence, 372 residues long: Chaperone protein DnaJ (372 aa).

The 66-residue stretch at 5-70 (DYYDVLGVER…QKRANYDQYG (66 aa)) folds into the J domain. The CR-type zinc-finger motif lies at 130–208 (GTTKDIQINT…CHGDGRVHKK (79 aa)). Positions 143, 146, 160, 163, 182, 185, 196, and 199 each coordinate Zn(2+). CXXCXGXG motif repeat units follow at residues 143–150 (CDSCDGSG), 160–167 (CSTCHGAG), 182–189 (CPSCHGSG), and 196–203 (CKSCHGDG).

It belongs to the DnaJ family. Homodimer. The cofactor is Zn(2+).

Its subcellular location is the cytoplasm. Its function is as follows. Participates actively in the response to hyperosmotic and heat shock by preventing the aggregation of stress-denatured proteins and by disaggregating proteins, also in an autonomous, DnaK-independent fashion. Unfolded proteins bind initially to DnaJ; upon interaction with the DnaJ-bound protein, DnaK hydrolyzes its bound ATP, resulting in the formation of a stable complex. GrpE releases ADP from DnaK; ATP binding to DnaK triggers the release of the substrate protein, thus completing the reaction cycle. Several rounds of ATP-dependent interactions between DnaJ, DnaK and GrpE are required for fully efficient folding. Also involved, together with DnaK and GrpE, in the DNA replication of plasmids through activation of initiation proteins. The protein is Chaperone protein DnaJ of Pasteurella multocida (strain Pm70).